Here is a 719-residue protein sequence, read N- to C-terminus: Putative RNA-binding protein involved in heterochromatin assembly (719 aa).

The RRM domain maps to 226 to 322; it reads KILYMNNLPP…NLANTKQPRV (97 aa). A Phosphoserine modification is found at Ser-345. Residues 355 to 384 form a RanBP2-type 1 zinc finger; sequence RPGDWNCPSCGFSNFQRRTACFRCSFPAPS. Residues 389–415 are disordered; sequence HTANSNNNVNSSRNNLNNRVNSGSSSN. A compositionally biased stretch (low complexity) spans 392–415; it reads NSNNNVNSSRNNLNNRVNSGSSSN. Ser-455 bears the Phosphoserine mark. A disordered region spans residues 511 to 561; the sequence is NNNINGNGNGNGNNSNNNNNHNNNHNNNHHNGSINSNSNTNNNNNNNNGNN. The RanBP2-type 2 zinc-finger motif lies at 581 to 610; it reads RAGDWKCSTCTYHNFAKNVVCLRCGGPKSI. Residues 622–649 are compositionally biased toward polar residues; it reads DSSTFGPASRTPSNNNISVNTNGGSNAG. The tract at residues 622-661 is disordered; that stretch reads DSSTFGPASRTPSNNNISVNTNGGSNAGRTDGNDNKGRDI. Ser-630 carries the phosphoserine modification. A compositionally biased stretch (basic and acidic residues) spans 652–661; sequence DGNDNKGRDI.

It is found in the chromosome. The protein localises to the nucleus. May play a role in chromatin organization. In Saccharomyces cerevisiae (strain ATCC 204508 / S288c) (Baker's yeast), this protein is Putative RNA-binding protein involved in heterochromatin assembly.